Reading from the N-terminus, the 185-residue chain is Ribosome-recycling factor (185 aa).

The protein belongs to the RRF family.

It localises to the cytoplasm. Its function is as follows. Responsible for the release of ribosomes from messenger RNA at the termination of protein biosynthesis. May increase the efficiency of translation by recycling ribosomes from one round of translation to another. The chain is Ribosome-recycling factor from Shewanella sediminis (strain HAW-EB3).